The chain runs to 512 residues: ATP synthase subunit alpha (512 aa).

An ATP-binding site is contributed by 169–176; sequence GDRQTGKT.

It belongs to the ATPase alpha/beta chains family. In terms of assembly, F-type ATPases have 2 components, CF(1) - the catalytic core - and CF(0) - the membrane proton channel. CF(1) has five subunits: alpha(3), beta(3), gamma(1), delta(1), epsilon(1). CF(0) has three main subunits: a(1), b(2) and c(9-12). The alpha and beta chains form an alternating ring which encloses part of the gamma chain. CF(1) is attached to CF(0) by a central stalk formed by the gamma and epsilon chains, while a peripheral stalk is formed by the delta and b chains.

Its subcellular location is the cell inner membrane. The catalysed reaction is ATP + H2O + 4 H(+)(in) = ADP + phosphate + 5 H(+)(out). Functionally, produces ATP from ADP in the presence of a proton gradient across the membrane. The alpha chain is a regulatory subunit. In Rickettsia akari (strain Hartford), this protein is ATP synthase subunit alpha.